The chain runs to 462 residues: Integrator complex subunit 12 (462 aa).

Residues 42–132 form a disordered region; that stretch reads GIDSSYRPSQ…PETQSSPITV (91 aa). A compositionally biased stretch (polar residues) spans 59 to 86; the sequence is ISSTKNISIKQEPKISSSLPSGNNNGKV. K68 participates in a covalent cross-link: Glycyl lysine isopeptide (Lys-Gly) (interchain with G-Cter in SUMO2). A compositionally biased stretch (basic and acidic residues) spans 88-124; sequence TTEKVKKEAEKRPADKMKSDITEGVDIPKKPRLEKPE. The residue at position 128 (S128) is a Phosphoserine. Residues 159 to 215 form a PHD-type zinc finger; that stretch reads GLACVVCRQMMVASGNQLVECQECHNLYHRDCHKPQVTDKEANDPRLVWYCARCTRQ. Residue K254 forms a Glycyl lysine isopeptide (Lys-Gly) (interchain with G-Cter in SUMO2) linkage. Polar residues predominate over residues 301–328; that stretch reads SSAGPSTAKLSSTTQNNTGKPATSSANQ. The disordered stretch occupies residues 301 to 462; it reads SSAGPSTAKL…KKAAQKKLKK (162 aa). 2 stretches are compositionally biased toward low complexity: residues 347–358 and 382–437; these read KIGSNNSTTPTV and VSKV…GPTS. Residues 449–462 are compositionally biased toward basic residues; that stretch reads QMVKKKAAQKKLKK.

Belongs to the Integrator subunit 12 family. As to quaternary structure, component of the Integrator complex, composed of core subunits INTS1, INTS2, INTS3, INTS4, INTS5, INTS6, INTS7, INTS8, INTS9/RC74, INTS10, INTS11/CPSF3L, INTS12, INTS13, INTS14 and INTS15. The core complex associates with protein phosphatase 2A subunits PPP2CA and PPP2R1A, to form the Integrator-PP2A (INTAC) complex. In terms of processing, dephosphorylated at Ser-128 by the PNUTS-PP1 complex, promoting RNA polymerase II transcription pause-release.

Its subcellular location is the nucleus. In terms of biological role, component of the integrator complex, a multiprotein complex that terminates RNA polymerase II (Pol II) transcription in the promoter-proximal region of genes. The integrator complex provides a quality checkpoint during transcription elongation by driving premature transcription termination of transcripts that are unfavorably configured for transcriptional elongation: the complex terminates transcription by (1) catalyzing dephosphorylation of the C-terminal domain (CTD) of Pol II subunit POLR2A/RPB1 and SUPT5H/SPT5, (2) degrading the exiting nascent RNA transcript via endonuclease activity and (3) promoting the release of Pol II from bound DNA. The integrator complex is also involved in terminating the synthesis of non-coding Pol II transcripts, such as enhancer RNAs (eRNAs), small nuclear RNAs (snRNAs), telomerase RNAs and long non-coding RNAs (lncRNAs). Mediates recruitment of cytoplasmic dynein to the nuclear envelope, probably as component of the integrator complex. The polypeptide is Integrator complex subunit 12 (INTS12) (Pongo abelii (Sumatran orangutan)).